The following is a 281-amino-acid chain: 4-diphosphocytidyl-2-C-methyl-D-erythritol kinase (281 aa).

Lys-11 is an active-site residue. 92 to 102 (LVSAGLAGGSA) contacts ATP. Asp-132 is a catalytic residue.

It belongs to the GHMP kinase family. IspE subfamily.

It catalyses the reaction 4-CDP-2-C-methyl-D-erythritol + ATP = 4-CDP-2-C-methyl-D-erythritol 2-phosphate + ADP + H(+). The protein operates within isoprenoid biosynthesis; isopentenyl diphosphate biosynthesis via DXP pathway; isopentenyl diphosphate from 1-deoxy-D-xylulose 5-phosphate: step 3/6. Functionally, catalyzes the phosphorylation of the position 2 hydroxy group of 4-diphosphocytidyl-2C-methyl-D-erythritol. The protein is 4-diphosphocytidyl-2-C-methyl-D-erythritol kinase of Ehrlichia ruminantium (strain Welgevonden).